Here is a 268-residue protein sequence, read N- to C-terminus: Putative hydro-lyase ABSDF2257 (268 aa).

It belongs to the D-glutamate cyclase family.

The protein is Putative hydro-lyase ABSDF2257 of Acinetobacter baumannii (strain SDF).